The sequence spans 200 residues: MPPKKAPTTAKKAASGPTHTSYRDMIKDAILNLKERNGSSRQSIKKYVLANNKLAPASQNAFDSQFNKAIKAGVEKGDFIQPKGTSGPVKLAKKQAPAKPAPKKPATTTKTAAPKKTATKKADKAEKAEKPKTKKTNAGVKKPAGRPKANTAKPRKASTAAPAVVDKPKVVSVTKSGRKTTTTAKPTEKATKKTAKNKKA.

A compositionally biased stretch (low complexity) spans 1–14 (MPPKKAPTTAKKAA). Disordered regions lie at residues 1-20 (MPPK…PTHT) and 78-200 (DFIQ…NKKA). An H15 domain is found at 18–93 (THTSYRDMIK…GTSGPVKLAK (76 aa)). The segment covering 94-116 (KQAPAKPAPKKPATTTKTAAPKK) has biased composition (low complexity). Residues 120-131 (KKADKAEKAEKP) show a composition bias toward basic and acidic residues. A compositionally biased stretch (low complexity) spans 159–185 (TAAPAVVDKPKVVSVTKSGRKTTTTAK).

The protein belongs to the histone H1/H5 family.

It localises to the nucleus. Its subcellular location is the chromosome. In terms of biological role, could act as an H1-type linker histone. The chain is Histone H1 (hhoA) from Emericella nidulans (strain FGSC A4 / ATCC 38163 / CBS 112.46 / NRRL 194 / M139) (Aspergillus nidulans).